We begin with the raw amino-acid sequence, 753 residues long: MLRFFILFSLFLHSSVAAPKTPAAAAAVPAKKWLTLNGQEPAVVARGGFSGLFPESSISANDLAIGTSSPGFTMLCNLQMTKDGVGLCLSDIRLDNATTISSVFPKAQKTYKVNGQDLKGWFVIDYDADTIFNKVTLVQNIFSRPSIFDGQMSVSAVEDVLGTKPPKFWLSVQYDAFYMEHKLSPAEYLRSLRFRGINVISSPEIGFLKSIGMDAGRAKTKLIFEFKDPEAVEPTTNKKYSEIQQNLAAIKAFASGVLVPKDYIWPIDSAKYLKPATTFVADAHKAGLEVYASGFANDLRTSFNYSYDPSAEYLQFVDNGQFSVDGVITDFPPTASQSITCFSHQNGNLPKAGHALVITHNGASGDYPGCTDLAYQKAIDDGADIIDCSVQMSKDGIAFCHDAADLSASTTARTTFMSRATSVPEIQPTNGIFSFDLTWAEIQSVKPQIENPFTATGFQRNPANKNAGKFTTLADFLELGKAKAVTGVLINIQNAAYLASKKGLGVVDVVKSALTNSTLDKQSTQKVLIQSDDSSVLSSFEAVPPYTRVLSIDKEIGDAPKTSIEEIKKHADAVNLLRTSLITVSQSFATGKTNVVEEMHKANISVYVSVLRNEYIAIAFDYFSDPTIELATFIAGRGVDGVITEFPATATRYLRSPCSDLNKDQPYAILPADAGALLTVADKEAQLPAIPPNPPLDAKDVIDPPLPPVAKLASNGTEGGPPQTPPRSGTVAIAANLSLSLLAMMALGLLYTA.

A signal peptide spans M1–A17. 2 GP-PDE domains span residues P41 to I339 and A355 to L654. N-linked (GlcNAc...) asparagine glycosylation is found at N304, N516, N603, and N715. The segment at P707–G729 is disordered. The helical transmembrane segment at V731–Y751 threads the bilayer.

This sequence belongs to the glycerophosphoryl diester phosphodiesterase family. Expressed in flowers and siliques.

It localises to the membrane. The enzyme catalyses a sn-glycero-3-phosphodiester + H2O = an alcohol + sn-glycerol 3-phosphate + H(+). This is Glycerophosphodiester phosphodiesterase GDPDL6 from Arabidopsis thaliana (Mouse-ear cress).